A 277-amino-acid chain; its full sequence is Shikimate dehydrogenase (NADP(+)) (277 aa).

Shikimate contacts are provided by residues 15–17 (SLS) and threonine 62. The active-site Proton acceptor is lysine 66. Shikimate contacts are provided by asparagine 87 and aspartate 102. NADP(+)-binding positions include 127-131 (GAGGA), 151-156 (NRTRDK), and isoleucine 219. Tyrosine 221 lines the shikimate pocket. Glycine 242 contributes to the NADP(+) binding site.

This sequence belongs to the shikimate dehydrogenase family. Homodimer.

It carries out the reaction shikimate + NADP(+) = 3-dehydroshikimate + NADPH + H(+). Its pathway is metabolic intermediate biosynthesis; chorismate biosynthesis; chorismate from D-erythrose 4-phosphate and phosphoenolpyruvate: step 4/7. Involved in the biosynthesis of the chorismate, which leads to the biosynthesis of aromatic amino acids. Catalyzes the reversible NADPH linked reduction of 3-dehydroshikimate (DHSA) to yield shikimate (SA). This Bacillus mycoides (strain KBAB4) (Bacillus weihenstephanensis) protein is Shikimate dehydrogenase (NADP(+)).